Reading from the N-terminus, the 153-residue chain is ORM1-like protein 1 (153 aa).

Residues 1 to 26 are Cytoplasmic-facing; that stretch reads MNVGVAHSEVNPNTRVMNSRGMWLTY. Helical transmembrane passes span 27-46 and 47-64; these read ALGV…FSVP and VAWT…YVFL. Residues 65–100 are Cytoplasmic-facing; it reads HAVKGTPFETPDQGKARLLTHWEQLDYGVQFTSSRK. The chain crosses the membrane as a helical span at residues 101-121; that stretch reads FFTISPIILYFLASFYTKYDP. Residues 122–123 are Extracellular-facing; the sequence is TH. A helical transmembrane segment spans residues 124–140; that stretch reads FILNTASLLSVLIPKMP. Residues 141-153 lie on the Cytoplasmic side of the membrane; sequence QLHGVRIFGINKY.

This sequence belongs to the ORM family. In terms of assembly, ceramide-sensitive subunit of the serine palmitoyltransferase (SPT) complex, which is also composed of SPTLC1, SPTLC2/3 and SPTSSA/B. As to expression, widely expressed. Expressed in adult and fetal heart, brain, lung, liver, skeletal muscle and kidney. Expressed in adult pancreas and placenta and in fetal spleen abd thymus. Expressed at intermediate level in pancreas, placenta and brain but low in skeletal muscle and lung.

The protein localises to the endoplasmic reticulum membrane. Its function is as follows. Plays an essential role in the homeostatic regulation of sphingolipid de novo biosynthesis by modulating the activity of the serine palmitoyltransferase (SPT) in response to ceramide levels. When complexed to SPT, the binding of ceramides to its N-terminus stabilizes a conformation that block SPT substrate entry, hence preventing SPT catalytic activity. Through this mechanism, maintains ceramide levels at sufficient concentrations for the production of complex sphingolipids, but which prevents the accumulation of ceramides to levels that trigger apoptosis. In Homo sapiens (Human), this protein is ORM1-like protein 1 (ORMDL1).